Consider the following 79-residue polypeptide: Defensin-like protein 54 (79 aa).

The first 27 residues, 1–27, serve as a signal peptide directing secretion; sequence MGIKKTSATVFLVIILTISFSYYDVEA. 4 disulfide bridges follow: Cys39-Cys76, Cys43-Cys67, Cys52-Cys74, and Cys56-Cys75.

The protein belongs to the DEFL family.

It localises to the secreted. The sequence is that of Defensin-like protein 54 from Arabidopsis thaliana (Mouse-ear cress).